We begin with the raw amino-acid sequence, 380 residues long: Alcohol dehydrogenase 1 (380 aa).

Residues cysteine 48, threonine 50, histidine 70, cysteine 100, cysteine 103, cysteine 106, cysteine 114, and cysteine 178 each coordinate Zn(2+). 2 residues coordinate an alcohol: threonine 50 and histidine 70. Threonine 50 is a binding site for NAD(+). Residues 203-208 (GLGAVG), aspartate 227, arginine 232, threonine 273, valine 296, 296-298 (VGV), and arginine 373 contribute to the NAD(+) site.

Belongs to the zinc-containing alcohol dehydrogenase family. Homodimer. Zn(2+) is required as a cofactor.

Its subcellular location is the cytoplasm. The enzyme catalyses a primary alcohol + NAD(+) = an aldehyde + NADH + H(+). It catalyses the reaction a secondary alcohol + NAD(+) = a ketone + NADH + H(+). The sequence is that of Alcohol dehydrogenase 1 from Pisum sativum (Garden pea).